The chain runs to 267 residues: 3-methyl-2-oxobutanoate hydroxymethyltransferase (267 aa).

Residues D45 and D84 each coordinate Mg(2+). 3-methyl-2-oxobutanoate contacts are provided by residues 45–46, D84, and K113; that span reads DS. E115 is a Mg(2+) binding site. E182 acts as the Proton acceptor in catalysis.

Belongs to the PanB family. Homodecamer; pentamer of dimers. It depends on Mg(2+) as a cofactor.

It is found in the cytoplasm. It catalyses the reaction 3-methyl-2-oxobutanoate + (6R)-5,10-methylene-5,6,7,8-tetrahydrofolate + H2O = 2-dehydropantoate + (6S)-5,6,7,8-tetrahydrofolate. It functions in the pathway cofactor biosynthesis; coenzyme A biosynthesis. In terms of biological role, catalyzes the reversible reaction in which hydroxymethyl group from 5,10-methylenetetrahydrofolate is transferred onto alpha-ketoisovalerate to form ketopantoate. The protein is 3-methyl-2-oxobutanoate hydroxymethyltransferase of Saccharolobus islandicus (strain Y.N.15.51 / Yellowstone #2) (Sulfolobus islandicus).